The sequence spans 89 residues: Large ribosomal subunit protein bL27 (89 aa).

The interval 1–20 is disordered; that stretch reads MAHKKAGGSSRNGRDSAGRR.

Belongs to the bacterial ribosomal protein bL27 family.

In Zymomonas mobilis subsp. mobilis (strain ATCC 31821 / ZM4 / CP4), this protein is Large ribosomal subunit protein bL27.